A 367-amino-acid polypeptide reads, in one-letter code: tRNA pseudouridine synthase D (367 aa).

Asp-80 acts as the Nucleophile in catalysis. The TRUD domain maps to 156–316; the sequence is GIPNWFGEQR…LKQERRALRL (161 aa).

The protein belongs to the pseudouridine synthase TruD family.

It carries out the reaction uridine(13) in tRNA = pseudouridine(13) in tRNA. Its function is as follows. Responsible for synthesis of pseudouridine from uracil-13 in transfer RNAs. This chain is tRNA pseudouridine synthase D, found in Xanthomonas campestris pv. campestris (strain B100).